The following is a 578-amino-acid chain: Putative transporter B0361.11 (578 aa).

A disordered region spans residues 1-30; that stretch reads MSISRRSYEQFDEMKSENQENNSKKKSSER. 11 helical membrane passes run 51-71, 148-168, 182-202, 232-252, 263-283, 339-359, 373-393, 399-419, 426-446, 457-477, and 486-506; these read IFTYVLVQTLNFFYSSSMYIM, FGLTIFTIGAVIAVPFMSMLA, ILAFLANMAASFSPNFAIFLI, AWITVVYNVAWSLGMVWTLLV, YFIVSLPGVYGFALWYFLPES, IWLLFANGFIEMVISLVYFAI, AFLYSSLIEIPAGLAVIPLMM, MIVIWCLVFQTLALIGVTVFL, LVIMLVAKVMATIIYSVHPIW, SLCFSLMNIPQSMGIIMSPYV, and WIPFVVIALFSFISATLAFML. Residues 532 to 550 are compositionally biased toward low complexity; that stretch reads AYRRSKSSSSSVSALSKTS. A disordered region spans residues 532-561; sequence AYRRSKSSSSSVSALSKTSVRSKKTLSSES.

Belongs to the major facilitator superfamily. Sugar transporter (TC 2.A.1.1) family.

The protein localises to the membrane. The sequence is that of Putative transporter B0361.11 from Caenorhabditis elegans.